Reading from the N-terminus, the 222-residue chain is Probable transaldolase 2 (222 aa).

Residue Lys-90 is the Schiff-base intermediate with substrate of the active site.

This sequence belongs to the transaldolase family. Type 3B subfamily.

The protein resides in the cytoplasm. The catalysed reaction is D-sedoheptulose 7-phosphate + D-glyceraldehyde 3-phosphate = D-erythrose 4-phosphate + beta-D-fructose 6-phosphate. Its pathway is carbohydrate degradation; pentose phosphate pathway; D-glyceraldehyde 3-phosphate and beta-D-fructose 6-phosphate from D-ribose 5-phosphate and D-xylulose 5-phosphate (non-oxidative stage): step 2/3. Functionally, transaldolase is important for the balance of metabolites in the pentose-phosphate pathway. This is Probable transaldolase 2 from Bacillus cereus (strain ATCC 14579 / DSM 31 / CCUG 7414 / JCM 2152 / NBRC 15305 / NCIMB 9373 / NCTC 2599 / NRRL B-3711).